A 361-amino-acid chain; its full sequence is tRNA/tmRNA (uracil-C(5))-methyltransferase (361 aa).

Residues Gln183, Tyr211, Asn216, Glu232, and Asp294 each contribute to the S-adenosyl-L-methionine site. Cys319 acts as the Nucleophile in catalysis. Catalysis depends on Glu353, which acts as the Proton acceptor.

Belongs to the class I-like SAM-binding methyltransferase superfamily. RNA M5U methyltransferase family. TrmA subfamily.

It catalyses the reaction uridine(54) in tRNA + S-adenosyl-L-methionine = 5-methyluridine(54) in tRNA + S-adenosyl-L-homocysteine + H(+). It carries out the reaction uridine(341) in tmRNA + S-adenosyl-L-methionine = 5-methyluridine(341) in tmRNA + S-adenosyl-L-homocysteine + H(+). Functionally, dual-specificity methyltransferase that catalyzes the formation of 5-methyluridine at position 54 (m5U54) in all tRNAs, and that of position 341 (m5U341) in tmRNA (transfer-mRNA). This chain is tRNA/tmRNA (uracil-C(5))-methyltransferase, found in Acinetobacter baumannii (strain AYE).